We begin with the raw amino-acid sequence, 560 residues long: Ubiquitin carboxyl-terminal hydrolase MINDY-3 homolog (560 aa).

Over residues 1–13 (MNEKIVREQRGGE) the composition is skewed to basic and acidic residues. 2 disordered regions span residues 1–30 (MNEK…AASA) and 44–91 (SHKT…MLNA). Low complexity-rich tracts occupy residues 15 to 30 (SPSS…AASA) and 52 to 81 (TASS…SSSS). Cysteine 139 (nucleophile) is an active-site residue. Residues 203–237 (TEAGSTKKRSPAGEEESALAGQAAGSSEEVEEAAE) are disordered. A phosphoserine mark is found at serine 212 and serine 219. Catalysis depends on histidine 403, which acts as the Proton acceptor.

It belongs to the MINDY deubiquitinase family. FAM188 subfamily.

The catalysed reaction is Thiol-dependent hydrolysis of ester, thioester, amide, peptide and isopeptide bonds formed by the C-terminal Gly of ubiquitin (a 76-residue protein attached to proteins as an intracellular targeting signal).. Its function is as follows. Hydrolase that can remove 'Lys-48'-linked conjugated ubiquitin from proteins. This is Ubiquitin carboxyl-terminal hydrolase MINDY-3 homolog (mindy3) from Drosophila melanogaster (Fruit fly).